A 201-amino-acid polypeptide reads, in one-letter code: Probable calcium-binding protein CML15 (201 aa).

The segment at 1–55 is disordered; that stretch reads MGKVRAFFSRKGRGNSSGRSRSMREAAMNVDWSPRPSDLAAAAAAKPRPPAAEDE. EF-hand domains are found at residues 51–86, 87–122, 125–160, and 161–196; these read AAED…VGHA, VTDD…PPGD, AAEE…IGEA, and ATVA…GAGF. Residues D64, N66, D68, R70, E75, D100, D102, D104, Y106, E111, D138, D140, N142, E149, D174, N176, D178, and E185 each contribute to the Ca(2+) site.

Its function is as follows. Potential calcium sensor. This chain is Probable calcium-binding protein CML15 (CML15), found in Oryza sativa subsp. japonica (Rice).